A 183-amino-acid chain; its full sequence is Large ribosomal subunit protein eL18 (183 aa).

A disordered region spans residues 150 to 183; the sequence is RHFGPAPGAPRSHTKPYVRTKGHEKARPSRRANV.

It belongs to the eukaryotic ribosomal protein eL18 family.

It is found in the cytoplasm. This is Large ribosomal subunit protein eL18 (RpL18) from Bombyx mori (Silk moth).